The chain runs to 205 residues: Macrophage immunometabolism regulator (205 aa).

The disordered stretch occupies residues 1 to 40 (MEVDINGVNRTNNSVPSTTEGSSPSKPDPEKPRCSSTPCS). Residues 8 to 25 (VNRTNNSVPSTTEGSSPS) are compositionally biased toward polar residues.

The protein belongs to the UNC119-binding protein family. In terms of assembly, interacts with unc119 family proteins; interaction preferentially takes place when unc119 proteins are unliganded with myristoylated proteins.

The protein localises to the cytoplasm. It localises to the cell projection. Its subcellular location is the cilium. May play a role in immune regulation through regulation of the macrophage function. May also play a role in trafficking of proteins via its interaction with unc119 family cargo adapters. May play a role in ciliary membrane localization. The protein is Macrophage immunometabolism regulator (macir) of Xenopus tropicalis (Western clawed frog).